We begin with the raw amino-acid sequence, 304 residues long: Urease accessory protein UreD 2 (304 aa).

This sequence belongs to the UreD family. As to quaternary structure, ureD, UreF and UreG form a complex that acts as a GTP-hydrolysis-dependent molecular chaperone, activating the urease apoprotein by helping to assemble the nickel containing metallocenter of UreC. The UreE protein probably delivers the nickel.

Its subcellular location is the cytoplasm. Required for maturation of urease via the functional incorporation of the urease nickel metallocenter. Its function is as follows. Disrupting the ure2 operon has no effect on urease activity or pathogen survival in BALB/c mice when administered orally. This chain is Urease accessory protein UreD 2, found in Brucella abortus (strain 2308).